A 252-amino-acid polypeptide reads, in one-letter code: Protein PF0476 (252 aa).

It belongs to the CinA family.

This Pyrococcus furiosus (strain ATCC 43587 / DSM 3638 / JCM 8422 / Vc1) protein is Protein PF0476.